Consider the following 1235-residue polypeptide: ATP-dependent helicase/nuclease subunit A (1235 aa).

The region spanning serine 12–arginine 482 is the UvrD-like helicase ATP-binding domain. Alanine 33 to threonine 40 contributes to the ATP binding site. Residues alanine 509 to glycine 800 enclose the UvrD-like helicase C-terminal domain.

It belongs to the helicase family. AddA subfamily. In terms of assembly, heterodimer of AddA and AddB/RexB. Mg(2+) is required as a cofactor.

It carries out the reaction Couples ATP hydrolysis with the unwinding of duplex DNA by translocating in the 3'-5' direction.. The catalysed reaction is ATP + H2O = ADP + phosphate + H(+). In terms of biological role, the heterodimer acts as both an ATP-dependent DNA helicase and an ATP-dependent, dual-direction single-stranded exonuclease. Recognizes the chi site generating a DNA molecule suitable for the initiation of homologous recombination. The AddA nuclease domain is required for chi fragment generation; this subunit has the helicase and 3' -&gt; 5' nuclease activities. This chain is ATP-dependent helicase/nuclease subunit A, found in Listeria monocytogenes serovar 1/2a (strain ATCC BAA-679 / EGD-e).